The following is a 674-amino-acid chain: Probable L-type lectin-domain containing receptor kinase I.5 (674 aa).

The first 22 residues, 1–22 (MSKGLFLIWLISSFHLISFSTS), serve as a signal peptide directing secretion. The Extracellular portion of the chain corresponds to 23-286 (SKDTSFVFNG…RPRAEHKKVQ (264 aa)). The legume-lectin like stretch occupies residues 25-258 (DTSFVFNGFG…YHYLLGWSFS (234 aa)). Residues N124, N181, N185, N204, and N225 are each glycosylated (N-linked (GlcNAc...) asparagine). The chain crosses the membrane as a helical span at residues 287–307 (FALIIALPVILAIVVMAVLAG). The Cytoplasmic segment spans residues 308 to 674 (VYYHRKKKYA…DHEQPLEFKS (367 aa)). The 282-residue stretch at 344 to 625 (FHKDRFLGRG…LPLPDFSPYT (282 aa)) folds into the Protein kinase domain. ATP contacts are provided by residues 350–358 (LGRGGFGEV) and K372. D468 functions as the Proton acceptor in the catalytic mechanism. The segment covering 649–662 (NWSAPSASSSSANN) has biased composition (low complexity). Residues 649-674 (NWSAPSASSSSANNSKDHEQPLEFKS) form a disordered region. Positions 663 to 674 (SKDHEQPLEFKS) are enriched in basic and acidic residues.

This sequence in the C-terminal section; belongs to the protein kinase superfamily. Ser/Thr protein kinase family. In the N-terminal section; belongs to the leguminous lectin family.

It localises to the cell membrane. It carries out the reaction L-seryl-[protein] + ATP = O-phospho-L-seryl-[protein] + ADP + H(+). The enzyme catalyses L-threonyl-[protein] + ATP = O-phospho-L-threonyl-[protein] + ADP + H(+). The protein is Probable L-type lectin-domain containing receptor kinase I.5 (LECRK15) of Arabidopsis thaliana (Mouse-ear cress).